A 209-amino-acid polypeptide reads, in one-letter code: Imidazoleglycerol-phosphate dehydratase (209 aa).

This sequence belongs to the imidazoleglycerol-phosphate dehydratase family.

The protein localises to the cytoplasm. The enzyme catalyses D-erythro-1-(imidazol-4-yl)glycerol 3-phosphate = 3-(imidazol-4-yl)-2-oxopropyl phosphate + H2O. It participates in amino-acid biosynthesis; L-histidine biosynthesis; L-histidine from 5-phospho-alpha-D-ribose 1-diphosphate: step 6/9. In Nostoc sp. (strain PCC 7120 / SAG 25.82 / UTEX 2576), this protein is Imidazoleglycerol-phosphate dehydratase.